The sequence spans 352 residues: Elongation factor Ts (352 aa).

The segment at 81–84 (TDFV) is involved in Mg(2+) ion dislocation from EF-Tu.

The protein belongs to the EF-Ts family.

The protein resides in the cytoplasm. Associates with the EF-Tu.GDP complex and induces the exchange of GDP to GTP. It remains bound to the aminoacyl-tRNA.EF-Tu.GTP complex up to the GTP hydrolysis stage on the ribosome. In Campylobacter hominis (strain ATCC BAA-381 / DSM 21671 / CCUG 45161 / LMG 19568 / NCTC 13146 / CH001A), this protein is Elongation factor Ts.